The following is a 505-amino-acid chain: RNA-splicing ligase RtcB homolog (505 aa).

The Mn(2+) site is built by Asp-119, Cys-122, His-227, and His-259. 226–230 contacts GMP; the sequence is NHYAE. Position 300 is a phosphoserine (Ser-300). His-353 provides a ligand contact to Mn(2+). GMP is bound by residues 353–354, 402–405, Ser-409, and 428–431; these read HN, GGTM, and HGAG. His-428 acts as the GMP-histidine intermediate in catalysis. Residue Lys-496 forms a Glycyl lysine isopeptide (Lys-Gly) (interchain with G-Cter in SUMO2) linkage. GMP is bound at residue Lys-504.

The protein belongs to the RtcB family. As to quaternary structure, catalytic component of the tRNA-splicing ligase complex. Requires Mn(2+) as cofactor.

Its subcellular location is the nucleus. It localises to the cytoplasm. It catalyses the reaction a 3'-end 3'-phospho-ribonucleotide-RNA + a 5'-end dephospho-ribonucleoside-RNA + GTP = a ribonucleotidyl-ribonucleotide-RNA + GMP + diphosphate. It carries out the reaction a 3'-end 2',3'-cyclophospho-ribonucleotide-RNA + a 5'-end dephospho-ribonucleoside-RNA + GTP + H2O = a ribonucleotidyl-ribonucleotide-RNA + GMP + diphosphate + H(+). Its activity is regulated as follows. Protein archease stimulates the activity of the tRNA ligase complex with high efficiency in the presence of GTP. Catalytic subunit of the tRNA-splicing ligase complex that acts by directly joining spliced tRNA halves to mature-sized tRNAs by incorporating the precursor-derived splice junction phosphate into the mature tRNA as a canonical 3',5'-phosphodiester. May act as an RNA ligase with broad substrate specificity, and may function toward other RNAs. This is RNA-splicing ligase RtcB homolog from Homo sapiens (Human).